Reading from the N-terminus, the 544-residue chain is CTP synthase (544 aa).

Positions 1-267 are amidoligase domain; the sequence is MAKFVFITGG…CREVLDVLDL (267 aa). Residue serine 13 coordinates CTP. Serine 13 provides a ligand contact to UTP. Residues 14 to 19 and aspartate 71 contribute to the ATP site; that span reads SIGKGI. The Mg(2+) site is built by aspartate 71 and glutamate 141. Residues 148–150, 188–193, and lysine 224 each bind CTP; these read DIE and KTKPTQ. UTP is bound by residues 188–193 and lysine 224; that span reads KTKPTQ. The Glutamine amidotransferase type-1 domain occupies 292–534; that stretch reads KVALVGKYIQ…IEAAQQRLPS (243 aa). Glycine 354 lines the L-glutamine pocket. Cysteine 381 serves as the catalytic Nucleophile; for glutamine hydrolysis. L-glutamine-binding positions include 382-385, glutamate 405, and arginine 462; that span reads LGMQ. Active-site residues include histidine 507 and glutamate 509.

It belongs to the CTP synthase family. In terms of assembly, homotetramer.

It catalyses the reaction UTP + L-glutamine + ATP + H2O = CTP + L-glutamate + ADP + phosphate + 2 H(+). It carries out the reaction L-glutamine + H2O = L-glutamate + NH4(+). The catalysed reaction is UTP + NH4(+) + ATP = CTP + ADP + phosphate + 2 H(+). It participates in pyrimidine metabolism; CTP biosynthesis via de novo pathway; CTP from UDP: step 2/2. Its activity is regulated as follows. Allosterically activated by GTP, when glutamine is the substrate; GTP has no effect on the reaction when ammonia is the substrate. The allosteric effector GTP functions by stabilizing the protein conformation that binds the tetrahedral intermediate(s) formed during glutamine hydrolysis. Inhibited by the product CTP, via allosteric rather than competitive inhibition. Functionally, catalyzes the ATP-dependent amination of UTP to CTP with either L-glutamine or ammonia as the source of nitrogen. Regulates intracellular CTP levels through interactions with the four ribonucleotide triphosphates. This is CTP synthase from Parasynechococcus marenigrum (strain WH8102).